We begin with the raw amino-acid sequence, 254 residues long: 5'/3'-nucleotidase SurE (254 aa).

Positions 9, 10, 40, and 93 each coordinate a divalent metal cation.

The protein belongs to the SurE nucleotidase family. It depends on a divalent metal cation as a cofactor.

It localises to the cytoplasm. The catalysed reaction is a ribonucleoside 5'-phosphate + H2O = a ribonucleoside + phosphate. It catalyses the reaction a ribonucleoside 3'-phosphate + H2O = a ribonucleoside + phosphate. The enzyme catalyses [phosphate](n) + H2O = [phosphate](n-1) + phosphate + H(+). Its function is as follows. Nucleotidase with a broad substrate specificity as it can dephosphorylate various ribo- and deoxyribonucleoside 5'-monophosphates and ribonucleoside 3'-monophosphates with highest affinity to 3'-AMP. Also hydrolyzes polyphosphate (exopolyphosphatase activity) with the preference for short-chain-length substrates (P20-25). Might be involved in the regulation of dNTP and NTP pools, and in the turnover of 3'-mononucleotides produced by numerous intracellular RNases (T1, T2, and F) during the degradation of various RNAs. The chain is 5'/3'-nucleotidase SurE from Photorhabdus laumondii subsp. laumondii (strain DSM 15139 / CIP 105565 / TT01) (Photorhabdus luminescens subsp. laumondii).